We begin with the raw amino-acid sequence, 470 residues long: Cysteine--tRNA ligase (470 aa).

Position 27 (Cys-27) interacts with Zn(2+). The short motif at 29 to 39 is the 'HIGH' region element; that stretch reads PTVYNYIHIGN. Zn(2+)-binding residues include Cys-207, His-232, and Glu-236. The 'KMSKS' region signature appears at 264–268; sequence KMSKS. ATP is bound at residue Lys-267.

This sequence belongs to the class-I aminoacyl-tRNA synthetase family. As to quaternary structure, monomer. Requires Zn(2+) as cofactor.

The protein localises to the cytoplasm. It catalyses the reaction tRNA(Cys) + L-cysteine + ATP = L-cysteinyl-tRNA(Cys) + AMP + diphosphate. The chain is Cysteine--tRNA ligase from Lachnoclostridium phytofermentans (strain ATCC 700394 / DSM 18823 / ISDg) (Clostridium phytofermentans).